The primary structure comprises 360 residues: Photosystem II protein D1 (360 aa).

3 helical membrane-spanning segments follow: residues 29–46 (YVGWFGVIMIPTLLTATT), 118–133 (HFLLGVFCYLGRQWEL), and 142–156 (WICVAYSAPVSAATA). His118 contributes to the chlorophyll a binding site. Tyr126 is a pheophytin a binding site. [CaMn4O5] cluster is bound by residues Asp170 and Glu189. The helical transmembrane segment at 197-218 (FHMLGVAGVFGGSLFSAMHGSL) threads the bilayer. His198 provides a ligand contact to chlorophyll a. Residues His215 and 264 to 265 (SF) each bind a quinone. His215 is a binding site for Fe cation. His272 is a Fe cation binding site. Residues 274 to 288 (FLGAWPVIGIWFTAM) form a helical membrane-spanning segment. [CaMn4O5] cluster contacts are provided by His332, Glu333, Asp342, and Ala344. The propeptide occupies 345-360 (SGEQAPVALTAPAING).

Belongs to the reaction center PufL/M/PsbA/D family. PSII is composed of 1 copy each of membrane proteins PsbA, PsbB, PsbC, PsbD, PsbE, PsbF, PsbH, PsbI, PsbJ, PsbK, PsbL, PsbM, PsbT, PsbX, PsbY, PsbZ, Psb30/Ycf12, peripheral proteins PsbO, CyanoQ (PsbQ), PsbU, PsbV and a large number of cofactors. It forms dimeric complexes. The D1/D2 heterodimer binds P680, chlorophylls that are the primary electron donor of PSII, and subsequent electron acceptors. It shares a non-heme iron and each subunit binds pheophytin, quinone, additional chlorophylls, carotenoids and lipids. D1 provides most of the ligands for the Mn4-Ca-O5 cluster of the oxygen-evolving complex (OEC). There is also a Cl(-1) ion associated with D1 and D2, which is required for oxygen evolution. The PSII complex binds additional chlorophylls, carotenoids and specific lipids. is required as a cofactor. Tyr-161 forms a radical intermediate that is referred to as redox-active TyrZ, YZ or Y-Z. In terms of processing, C-terminally processed by CtpA; processing is essential to allow assembly of the oxygen-evolving complex and thus photosynthetic growth.

It localises to the cellular thylakoid membrane. It carries out the reaction 2 a plastoquinone + 4 hnu + 2 H2O = 2 a plastoquinol + O2. Functionally, photosystem II (PSII) is a light-driven water:plastoquinone oxidoreductase that uses light energy to abstract electrons from H(2)O, generating O(2) and a proton gradient subsequently used for ATP formation. It consists of a core antenna complex that captures photons, and an electron transfer chain that converts photonic excitation into a charge separation. The D1/D2 (PsbA/PsbD) reaction center heterodimer binds P680, the primary electron donor of PSII as well as several subsequent electron acceptors. This Microcystis aeruginosa protein is Photosystem II protein D1.